The primary structure comprises 622 residues: MIEIDSIGHFPSSPGVYIMKDAEATVLYVGKARDLRKRIRSYFAASGDSRYQIRFLMARVTDIQFIVTDTEKEALILENTLIKKYRPKYNFNLRDDKTYFSLRMDMSSDFPRLSIIRKVTRDGARYFGPYSSASDARAVLKHLYKLFPLRHYPMETCRRRNRPCLFYQLKQCSAPCHGKISREDYMALAEGAALFLEGKNREILKIFRERMSAAAAAEKYEKAARFRDLIRSIEVTVEKQKVVAQGGDSDVIGFYREGEQLHIALLFLRGGTLTGSRNYSFSWEMDDHEGIASFLNEYYNQEVFIPSEIVLPIAIADPLPQEELLCELRGRRVSITVPQRGNKLELVRLAIKNAETAAAERKKAAESGEAILQTLKERLHLHKLPRRIECYDISNIQGQMAVGSKVAFVDGKADKAHYRRYRIKGVSQSDDFAMMREMFSRRFKPGTAPDDYPDLIIVDGGIGQLNVLTHVLGDLQITDVEAAGLAKSRVDREMGATEISRSDERVFLPNRKNPVVLRQNSAPLLLLARIRDEAHRFAVAYHKKLRGNKLLASQLEAIPGIGIKRRKELLRHFGSLKKISEATLEELRQVQGISATVAESLWKHLHENEKGDTNASPFVNFE.

The 80-residue stretch at 12–91 folds into the GIY-YIG domain; it reads SSPGVYIMKD…IKKYRPKYNF (80 aa). The UVR domain maps to 201–236; the sequence is REILKIFRERMSAAAAAEKYEKAARFRDLIRSIEVT.

It belongs to the UvrC family. In terms of assembly, interacts with UvrB in an incision complex.

Its subcellular location is the cytoplasm. Functionally, the UvrABC repair system catalyzes the recognition and processing of DNA lesions. UvrC both incises the 5' and 3' sides of the lesion. The N-terminal half is responsible for the 3' incision and the C-terminal half is responsible for the 5' incision. This chain is UvrABC system protein C, found in Geotalea daltonii (strain DSM 22248 / JCM 15807 / FRC-32) (Geobacter daltonii).